The sequence spans 378 residues: Spermidine/putrescine import ATP-binding protein PotA (378 aa).

The ABC transporter domain occupies 18 to 248 (VQLAGIRKCF…PKNLFVAGFI (231 aa)). Residue 50-57 (GPSGCGKT) coordinates ATP.

This sequence belongs to the ABC transporter superfamily. Spermidine/putrescine importer (TC 3.A.1.11.1) family. The complex is composed of two ATP-binding proteins (PotA), two transmembrane proteins (PotB and PotC) and a solute-binding protein (PotD).

Its subcellular location is the cell inner membrane. It catalyses the reaction ATP + H2O + polyamine-[polyamine-binding protein]Side 1 = ADP + phosphate + polyamineSide 2 + [polyamine-binding protein]Side 1.. In terms of biological role, part of the ABC transporter complex PotABCD involved in spermidine/putrescine import. Responsible for energy coupling to the transport system. The chain is Spermidine/putrescine import ATP-binding protein PotA from Shigella flexneri.